We begin with the raw amino-acid sequence, 152 residues long: Ribosome maturation factor RimP (152 aa).

It belongs to the RimP family.

The protein localises to the cytoplasm. Its function is as follows. Required for maturation of 30S ribosomal subunits. The polypeptide is Ribosome maturation factor RimP (Desulfitobacterium hafniense (strain Y51)).